Consider the following 3414-residue polypeptide: Genome polyprotein (3414 aa).

The segment at 1 to 30 is disordered; sequence MVKKAILKGKGGGPPRRVSKETATKTRQPR. Topologically, residues 1 to 98 are cytoplasmic; that stretch reads MVKKAILKGK…LQKRGKRRSA (98 aa). Positions 97–117 are cleaved as a propeptide — ER anchor for the capsid protein C, removed in mature form by serine protease NS3; that stretch reads SATDWMSWLLVITLLGMTIAA. A helical transmembrane segment spans residues 99–119; the sequence is TDWMSWLLVITLLGMTIAATV. Residues 120 to 242 are Extracellular-facing; that stretch reads RKERDGSTVI…HLTRVEGWVW (123 aa). N144 is a glycosylation site (N-linked (GlcNAc...) asparagine; by host). Residues 243–260 form a helical membrane-spanning segment; the sequence is KNRLLALAMVTVVWLTLE. A topological domain (cytoplasmic) is located at residue S261. Residues 262 to 280 form a helical membrane-spanning segment; that stretch reads VVTRVAVLVVLLCLAPVYA. The Extracellular segment spans residues 281–727; it reads SRCTHLENRD…HTVLGGAFNS (447 aa). 6 disulfide bridges follow: C283–C310, C340–C396, C340–C401, C354–C385, C372–C396, and C372–C401. The interval 378-391 is fusion peptide; it reads DRGWGNHCGLFGKG. N-linked (GlcNAc...) asparagine; by host glycosylation is present at N434. Cystine bridges form between C466-C570 and C587-C618. Residues 728 to 748 traverse the membrane as a helical segment; the sequence is IFGGVGFLPKLLLGVALAWLG. At 749 to 755 the chain is on the extracellular side; the sequence is LNMRNPT. Residues 756 to 776 traverse the membrane as a helical segment; that stretch reads MSMSFLLAGVLVLAMTLGVGA. The Extracellular segment spans residues 777–1132; the sequence is DVGCAVDTER…RSMVVADNGE (356 aa). Disulfide bonds link C780–C791, C831–C920, C955–C1000, C1057–C1106, C1068–C1090, and C1089–C1093. N-linked (GlcNAc...) asparagine; by host glycans are attached at residues N861, N983, and N999. The chain crosses the membrane as a helical span at residues 1133–1153; that stretch reads LLSEGGVPGIVALFVVLEYII. Over 1154 to 1158 the chain is Cytoplasmic; that stretch reads RRRPS. The chain crosses the membrane as a helical span at residues 1159–1179; the sequence is TGSTVVWGGIVVLALLVTGMV. Topologically, residues 1180–1187 are lumenal; sequence RMESLVRY. Residues 1188 to 1208 form a helical membrane-spanning segment; sequence VVAVGITFHLELGPEIVALML. Topologically, residues 1209–1293 are cytoplasmic; that stretch reads LQAVFELRVG…LLMALMTQQD (85 aa). A helical membrane pass occupies residues 1294–1314; sequence VVTVHHGLVCFLSAASACSIW. The Lumenal portion of the chain corresponds to 1315 to 1327; that stretch reads RLLRGHREQKGLT. A helical transmembrane segment spans residues 1328-1348; it reads WIVPLARLLGGEGSGIRLLAF. Residues 1349–1359 are Cytoplasmic-facing; it reads WELSAHRGRRS. The chain crosses the membrane as a helical span at residues 1360–1377; that stretch reads FSEPLTVVGVMLTLASGM. Residues 1378-1382 are Lumenal-facing; the sequence is MRHTS. The helical transmembrane segment at 1383-1403 threads the bilayer; it reads QEALCALAVASFLLLMLVLGT. Over 1404–1454 the chain is Cytoplasmic; sequence RKMQLVAEWSGCVEWHPELVNEGGEVSLRVRQDAMGNFHLTELEKEERMMA. The tract at residues 1410 to 1449 is interacts with and activates NS3 protease; that stretch reads AEWSGCVEWHPELVNEGGEVSLRVRQDAMGNFHLTELEKE. Residues 1455 to 1475 constitute an intramembrane region (helical); the sequence is FWLIAGLAASAIHWSGIIGVM. The Cytoplasmic portion of the chain corresponds to 1476-2160; that stretch reads GLWTLTKMLR…RMAERDAPEA (685 aa). One can recognise a Peptidase S7 domain in the interval 1490-1669; that stretch reads SDLVFSGQGG…EAEKSRPNLP (180 aa). Catalysis depends on charge relay system; for serine protease NS3 activity residues H1543, D1567, and S1627. The region spanning 1675 to 1831 is the Helicase ATP-binding domain; it reads TGWTSKGQIT…ESNGAITSEE (157 aa). 1688–1695 contacts ATP; it reads MHPGSGKT. Residues 1779 to 1782 carry the DEAH box motif; the sequence is DEAH. The Helicase C-terminal domain maps to 1841–2000; it reads DGFDWITEYE…TLRGPVATFY (160 aa). Residue K1883 is modified to N6-acetyllysine; by host. Residues 2161 to 2181 form a helical membrane-spanning segment; that stretch reads FLTMVEMMVLGLATLGVIWCF. At 2182 to 2189 the chain is on the lumenal side; it reads VVRTSISR. The segment at residues 2190–2210 is an intramembrane region (helical); it reads MMLGTLVLLASLLLLWAGGVG. Y2211 is a topological domain (lumenal). The chain crosses the membrane as a helical span at residues 2212–2232; the sequence is GNMAGVALIFYTLLTVLQPEA. Topologically, residues 2233–2244 are cytoplasmic; sequence GKQRSSDDNKLA. Residues 2245–2265 traverse the membrane as a helical segment; it reads YFLLTLCSLAGLVAANEMGFL. At 2266-2299 the chain is on the lumenal side; it reads EKTKADLSTVLWSEREEPRPWSEWTNVDIQPARS. The helical intramembrane region spans 2300 to 2320; the sequence is WGTYVLVVSLFTPYIIHQLQT. At 2321 to 2343 the chain is on the lumenal side; it reads KIQQLVNSAVASGAQAMRDLGGG. An intramembrane region (helical) is located at residues 2344-2364; the sequence is APFFGVAGHVMTLGVVSLIGA. Over 2365–2368 the chain is Lumenal; that stretch reads TPTS. The helical transmembrane segment at 2369 to 2389 threads the bilayer; the sequence is LMVGVGLAALHLAIVVSGLEA. Residues 2390–2432 lie on the Cytoplasmic side of the membrane; that stretch reads ELTQRAHKVFFSAMVRNPMVDGDVINPFGEGEAKPALYERRMS. Residues 2433–2453 form a helical membrane-spanning segment; that stretch reads LVLAIVLCLMSVVMNRTVASI. Residues 2454–2477 are Lumenal-facing; the sequence is TEASAVGLAAAGQLLRPEADTLWT. The helical transmembrane segment at 2478–2498 threads the bilayer; it reads MPVACGMSGVVRGSLWGFLPL. Residues 2499–3414 are Cytoplasmic-facing; that stretch reads GHRLWLRASG…WELRLESSII (916 aa). The mRNA cap 0-1 NS5-type MT domain occupies 2512-2776; sequence GGSEGDTLGD…ELDLGVGTRC (265 aa). S2567 is an S-adenosyl-L-methionine binding site. S2567 is modified (phosphoserine). The For 2'-O-MTase activity role is filled by K2572. 6 residues coordinate S-adenosyl-L-methionine: G2597, W2598, T2615, I2616, D2642, and V2643. Residue D2657 is the For 2'-O-MTase activity of the active site. I2658 is a binding site for S-adenosyl-L-methionine. Residues K2694 and E2730 each act as for 2'-O-MTase activity in the active site. The segment at 2730 to 2734 is interaction with host SCRIB; sequence EMYYS. An S-adenosyl-L-methionine-binding site is contributed by Y2732. Zn(2+) is bound by residues E2950, H2954, C2959, and C2962. The RdRp catalytic domain occupies 3040 to 3189; that stretch reads GLFYADDTAG…RPLDDRFGKA (150 aa). Zn(2+) is bound by residues H3224, C3240, and C3359.

It in the N-terminal section; belongs to the class I-like SAM-binding methyltransferase superfamily. mRNA cap 0-1 NS5-type methyltransferase family. As to quaternary structure, homodimer. Interacts (via N-terminus) with host EXOC1 (via C-terminus); this interaction results in EXOC1 degradation through the proteasome degradation pathway. In terms of assembly, forms heterodimers with envelope protein E in the endoplasmic reticulum and Golgi. Homodimer; in the endoplasmic reticulum and Golgi. Interacts with protein prM. Interacts with non-structural protein 1. As to quaternary structure, homodimer; Homohexamer when secreted. Interacts with envelope protein E. In terms of assembly, interacts (via N-terminus) with serine protease NS3. Forms a heterodimer with serine protease NS3. May form homooligomers. As to quaternary structure, forms a heterodimer with NS2B. Interacts with NS4B. Interacts with unphosphorylated RNA-directed RNA polymerase NS5; this interaction stimulates RNA-directed RNA polymerase NS5 guanylyltransferase activity. In terms of assembly, interacts with serine protease NS3. Homodimer. Interacts with host STAT2; this interaction inhibits the phosphorylation of the latter, and, when all viral proteins are present (polyprotein), targets STAT2 for degradation. Interacts with serine protease NS3. Interacts with host SCRIB; this interaction targets NS5 to the cell membrane periphery and nucleus, thereby allowing efficient host nuclear STAT1 inhibition. Specific enzymatic cleavages in vivo yield mature proteins. Cleavages in the lumen of endoplasmic reticulum are performed by host signal peptidase, whereas cleavages in the cytoplasmic side are performed by serine protease NS3. Signal cleavage at the 2K-4B site requires a prior NS3 protease-mediated cleavage at the 4A-2K site. Post-translationally, cleaved in post-Golgi vesicles by a host furin, releasing the mature small envelope protein M, and peptide pr. This cleavage is incomplete as up to 30% of viral particles still carry uncleaved prM. In terms of processing, N-glycosylated. N-glycosylated. The excreted form is glycosylated and this is required for efficient secretion of the protein from infected cells. Post-translationally, acetylated by host KAT5. Acetylation modulates NS3 RNA-binding and unwinding activities and plays an important positive role for viral replication. In terms of processing, phosphorylated on serines residues. This phosphorylation may trigger NS5 nuclear localization.

The protein localises to the virion. It localises to the host nucleus. Its subcellular location is the host cytoplasm. The protein resides in the host perinuclear region. It is found in the secreted. The protein localises to the virion membrane. It localises to the host endoplasmic reticulum membrane. It carries out the reaction Selective hydrolysis of -Xaa-Xaa-|-Yaa- bonds in which each of the Xaa can be either Arg or Lys and Yaa can be either Ser or Ala.. It catalyses the reaction RNA(n) + a ribonucleoside 5'-triphosphate = RNA(n+1) + diphosphate. The enzyme catalyses a ribonucleoside 5'-triphosphate + H2O = a ribonucleoside 5'-diphosphate + phosphate + H(+). The catalysed reaction is ATP + H2O = ADP + phosphate + H(+). It carries out the reaction a 5'-end (5'-triphosphoguanosine)-ribonucleoside in mRNA + S-adenosyl-L-methionine = a 5'-end (N(7)-methyl 5'-triphosphoguanosine)-ribonucleoside in mRNA + S-adenosyl-L-homocysteine. It catalyses the reaction a 5'-end (N(7)-methyl 5'-triphosphoguanosine)-ribonucleoside in mRNA + S-adenosyl-L-methionine = a 5'-end (N(7)-methyl 5'-triphosphoguanosine)-(2'-O-methyl-ribonucleoside) in mRNA + S-adenosyl-L-homocysteine + H(+). In terms of biological role, plays a role in virus budding by binding to the cell membrane and gathering the viral RNA into a nucleocapsid that forms the core of a mature virus particle. During virus entry, may induce genome penetration into the host cytoplasm after hemifusion induced by the surface proteins. Can migrate to the cell nucleus where it modulates host functions. Functionally, inhibits RNA silencing by interfering with host Dicer. Its function is as follows. Prevents premature fusion activity of envelope proteins in trans-Golgi by binding to envelope protein E at pH6.0. After virion release in extracellular space, gets dissociated from E dimers. Acts as a chaperone for envelope protein E during intracellular virion assembly by masking and inactivating envelope protein E fusion peptide. prM is the only viral peptide matured by host furin in the trans-Golgi network probably to avoid catastrophic activation of the viral fusion activity in acidic Golgi compartment prior to virion release. prM-E cleavage is inefficient, and many virions are only partially matured. These uncleaved prM would play a role in immune evasion. In terms of biological role, may play a role in virus budding. Exerts cytotoxic effects by activating a mitochondrial apoptotic pathway through M ectodomain. May display a viroporin activity. Functionally, binds to host cell surface receptor and mediates fusion between viral and cellular membranes. Envelope protein is synthesized in the endoplasmic reticulum in the form of heterodimer with protein prM. They play a role in virion budding in the ER, and the newly formed immature particle is covered with 60 spikes composed of heterodimer between precursor prM and envelope protein E. The virion is transported to the Golgi apparatus where the low pH causes dissociation of PrM-E heterodimers and formation of E homodimers. prM-E cleavage is inefficient, and many virions are only partially matured. These uncleaved prM would play a role in immune evasion. Its function is as follows. Involved in immune evasion, pathogenesis and viral replication. Once cleaved off the polyprotein, is targeted to three destinations: the viral replication cycle, the plasma membrane and the extracellular compartment. Essential for viral replication. Required for formation of the replication complex and recruitment of other non-structural proteins to the ER-derived membrane structures. Excreted as a hexameric lipoparticle that plays a role against host immune response. Antagonizing the complement function. Binds to the host macrophages and dendritic cells. Inhibits signal transduction originating from Toll-like receptor 3 (TLR3). Component of the viral RNA replication complex that functions in virion assembly and antagonizes the host immune response. In terms of biological role, required cofactor for the serine protease function of NS3. May have membrane-destabilizing activity and form viroporins. Functionally, displays three enzymatic activities: serine protease, NTPase and RNA helicase. NS3 serine protease, in association with NS2B, performs its autocleavage and cleaves the polyprotein at dibasic sites in the cytoplasm: C-prM, NS2A-NS2B, NS2B-NS3, NS3-NS4A, NS4A-2K and NS4B-NS5. NS3 RNA helicase binds RNA and unwinds dsRNA in the 3' to 5' direction. Its function is as follows. Regulates the ATPase activity of the NS3 helicase activity. NS4A allows NS3 helicase to conserve energy during unwinding. Functions as a signal peptide for NS4B and is required for the interferon antagonism activity of the latter. In terms of biological role, induces the formation of ER-derived membrane vesicles where the viral replication takes place. Inhibits interferon (IFN)-induced host STAT1 phosphorylation and nuclear translocation, thereby preventing the establishment of cellular antiviral state by blocking the IFN-alpha/beta pathway. Inhibits STAT2 translocation in the nucleus after IFN-alpha treatment. Functionally, replicates the viral (+) and (-) genome, and performs the capping of genomes in the cytoplasm. NS5 methylates viral RNA cap at guanine N-7 and ribose 2'-O positions. Besides its role in genome replication, also prevents the establishment of cellular antiviral state by blocking the interferon-alpha/beta (IFN-alpha/beta) signaling pathway. Inhibits host TYK2 and STAT2 phosphorylation, thereby preventing activation of JAK-STAT signaling pathway. This Tick-borne encephalitis virus (strain Hypr) (TBEV) protein is Genome polyprotein.